We begin with the raw amino-acid sequence, 329 residues long: 4-hydroxythreonine-4-phosphate dehydrogenase (329 aa).

2 residues coordinate substrate: His-136 and Thr-137. A divalent metal cation-binding residues include His-166, His-211, and His-266. Residues Lys-274, Asn-283, and Arg-292 each contribute to the substrate site.

Belongs to the PdxA family. As to quaternary structure, homodimer. Requires Zn(2+) as cofactor. It depends on Mg(2+) as a cofactor. The cofactor is Co(2+).

The protein localises to the cytoplasm. The enzyme catalyses 4-(phosphooxy)-L-threonine + NAD(+) = 3-amino-2-oxopropyl phosphate + CO2 + NADH. Its pathway is cofactor biosynthesis; pyridoxine 5'-phosphate biosynthesis; pyridoxine 5'-phosphate from D-erythrose 4-phosphate: step 4/5. Its function is as follows. Catalyzes the NAD(P)-dependent oxidation of 4-(phosphooxy)-L-threonine (HTP) into 2-amino-3-oxo-4-(phosphooxy)butyric acid which spontaneously decarboxylates to form 3-amino-2-oxopropyl phosphate (AHAP). The polypeptide is 4-hydroxythreonine-4-phosphate dehydrogenase (Pseudomonas putida (strain ATCC 47054 / DSM 6125 / CFBP 8728 / NCIMB 11950 / KT2440)).